Consider the following 1252-residue polypeptide: MFKCPERVSVKKKEDILDLPNLIEIQIKSYKQFLQIGKLAEERDNVGLEEVFREIFPIKSYNEATILEYLSYNLGVPKYSPEECIRRGITYSVTLKVRFRLTDETGIKEEEVYMGTIPIMTDKGTFIINGAERVVVSQVHRSPGINFEQEKHSKGNILFSFRIIPYRGSWLEAIFDINDLIYIHIDRKKRRRKILAMTFIRALGYSSDADIIEEFFQIEECSLKSEKDFSVLVGKILADNVLDEASSLVYGKAGEKLSTAMLKRMLDADISTLKIALEADENHPIIKMLAKDPTDSYEAALKDFYRRLRPGEPATLANARSTIMRLFFDPKRYNLGRVGRYKLNRKLGFPMDEESLSQVTLRKEDVIGALKYLIRLKMGDEKASIDDIDHLANRRVRSVGELIQNQCRSGLARMEKIVRERMNLFDFSSDTLIPGKIISAKGLTSVLKDFFGRSQLSQFMDQTNPVAELTHKRRLSALGPGGLNRERAGFEVRDVHASHYGRICPIETPEGPNIGLITSLSSFAKINEFGFIETPYRIVRDGVVTDEIEYMTADVEEECVIAQASANLDEYNMFTDPVCWARYRGEAFEADTSTVTHMDVSPKQLVSIVTGLIPFLEHDDANRALMGSNMQRQAVPLLKTEAPIVGTGLEARAAKDSGAIVVAEEDGVVEYVDGYKVVVAAKHNPTLKRTYEFKKFLRSNSGTCINQRPLCSVGDIVVKGDVIADGPATDQGELALGKNILVAFMPWYGYNFEDAVIISEKLIKQDAYTSIYIEEFELTARDTKLGKEEITRDIPNVSEEVLANLGEDGIIRIGAEVKPGDILVGKITPKSETELAPEERLLRAIFGEKAADVKDASLTVPPGTEGVVMDVKVFSRKDRLSKSDDELVEEAVHLKDLQKGYKNQISVLKTEYREKLGALLLNEKAPASIIHRRTADILVQEGTVFDQETIELLEQESLVDLLMPPCDMYDVLKNLLSDYETSLQRLEVNYKTEVEHIREGDADLDHGVIRQVKVYVASKRKLQVGDKMAGRHGNKGVVSKIVPEADMPYLANGETIQMILNPLGVPSRMNLGQVLETHLGYAAKTAGIHVKTPVFEGFPESRIWDMMIEQGLPADGKSYLYDGKTGERFDNTVVIGYIYMLKLSHLIADKIHARSIGPYSLVTQQPLGGKAQMGGQRFGEMEVWALEAYGVAHMLQEILTVKSDDVSGRTRIYESIVKGENLLKSGTPESFNVLIKEMQGLGLDVRPMVVDA.

It belongs to the RNA polymerase beta chain family. In terms of assembly, the RNAP catalytic core consists of 2 alpha, 1 beta, 1 beta' and 1 omega subunit. When a sigma factor is associated with the core the holoenzyme is formed, which can initiate transcription.

It catalyses the reaction RNA(n) + a ribonucleoside 5'-triphosphate = RNA(n+1) + diphosphate. In terms of biological role, DNA-dependent RNA polymerase catalyzes the transcription of DNA into RNA using the four ribonucleoside triphosphates as substrates. The protein is DNA-directed RNA polymerase subunit beta of Chlamydia felis (strain Fe/C-56) (Chlamydophila felis).